The sequence spans 362 residues: MASSGGQIGGVLDHHVQRAVCDSRAKYREGRRPRAVKVYTINLESWYLLIQGVPAVGAMKELVERFALYGTIEQYNALDEYPAEDFTEVYLIKFLNLQSARIAKRKMDEQSFFGGLLHVCYAPEFETVEETRKKLRERNAYVARMTKNKDHYMTKKHKDAKDFRGAFHSKTSGFPAASLNTSTGNSDLCLPYSSELPLCYFSPKCKCSSGERVDRPSNSSQDGRNFDETLGRCDHCDSLQKMQMKTLQNSLARPGTQKALTPSEAVDRFMPRTTQLQERKRRREDDCKRETLAEACTSSKEVMIGPQLPGIPKVDTHDGSWNTTASLIREKLKEVISSVPKPPEDKVEDVHRSRPLKQRRRI.

Residues 46–124 (WYLLIQGVPA…GLLHVCYAPE (79 aa)) enclose the RRM domain. Residues 334–362 (EVISSVPKPPEDKVEDVHRSRPLKQRRRI) form a disordered region. Residues 342 to 352 (PPEDKVEDVHR) show a composition bias toward basic and acidic residues. Basic residues predominate over residues 353-362 (SRPLKQRRRI).

Belongs to the RBM48 family. Component of the minor spliceosome. Within this complex, interacts with ARMC7 and PRPF8/PRP8.

In terms of biological role, as a component of the minor spliceosome, involved in the splicing of U12-type introns in pre-mRNAs. This is RNA-binding protein 48 (RBM48) from Bos taurus (Bovine).